A 685-amino-acid polypeptide reads, in one-letter code: Sulfate transporter 4.1, chloroplastic (685 aa).

The transit peptide at 1 to 23 directs the protein to the chloroplast; it reads MSYASLSVKDLTSLVSRSGTGSS. The segment covering 15 to 26 has biased composition (low complexity); sequence VSRSGTGSSSSL. The tract at residues 15–53 is disordered; the sequence is VSRSGTGSSSSLKPPGQTRPVKVIPLQHPDTSNEARPPS. Transmembrane regions (helical) follow at residues 97–117, 122–142, 147–167, 175–195, 203–223, 255–275, 283–303, 332–352, 369–389, 406–426, 434–454, and 473–493; these read LDLM…MSYA, LPPI…AIFG, LAIG…GGIA, IELA…MGLL, FISH…IGLS, WPPF…KHVG, FLRA…AKVF, TLLP…VGIA, LFGL…PATG, LSGL…TPMF, LAAI…AIFL, and LFFG…AFVI. The STAS domain maps to 518-642; that stretch reads QYPEAYTYNG…VRVHDAVQVC (125 aa).

This sequence belongs to the SLC26A/SulP transporter (TC 2.A.53) family. As to expression, expressed both in roots and leaves.

It is found in the plastid. The protein localises to the chloroplast membrane. Its function is as follows. H(+)/sulfate cotransporter that may play a role in the regulation of sulfate assimilation. The sequence is that of Sulfate transporter 4.1, chloroplastic (SULTR4;1) from Arabidopsis thaliana (Mouse-ear cress).